Consider the following 244-residue polypeptide: Methylthioribulose-1-phosphate dehydratase (244 aa).

Cys-89 provides a ligand contact to substrate. Zn(2+) contacts are provided by His-107 and His-109. Glu-130 (proton donor/acceptor) is an active-site residue. His-192 is a binding site for Zn(2+).

This sequence belongs to the aldolase class II family. MtnB subfamily. Zn(2+) serves as cofactor.

The protein localises to the cytoplasm. It catalyses the reaction 5-(methylsulfanyl)-D-ribulose 1-phosphate = 5-methylsulfanyl-2,3-dioxopentyl phosphate + H2O. It functions in the pathway amino-acid biosynthesis; L-methionine biosynthesis via salvage pathway; L-methionine from S-methyl-5-thio-alpha-D-ribose 1-phosphate: step 2/6. In terms of biological role, catalyzes the dehydration of methylthioribulose-1-phosphate (MTRu-1-P) into 2,3-diketo-5-methylthiopentyl-1-phosphate (DK-MTP-1-P). This is Methylthioribulose-1-phosphate dehydratase from Saccharomyces cerevisiae (strain YJM789) (Baker's yeast).